We begin with the raw amino-acid sequence, 378 residues long: UPF0754 membrane protein BC_0879 (378 aa).

A helical transmembrane segment spans residues tyrosine 357 to leucine 377.

This sequence belongs to the UPF0754 family.

It localises to the cell membrane. The sequence is that of UPF0754 membrane protein BC_0879 from Bacillus cereus (strain ATCC 14579 / DSM 31 / CCUG 7414 / JCM 2152 / NBRC 15305 / NCIMB 9373 / NCTC 2599 / NRRL B-3711).